The primary structure comprises 138 residues: Large ribosomal subunit protein uL16 (138 aa).

The segment covering 1 to 16 (MLIPRRVKHRKQHHPS) has biased composition (basic residues). The tract at residues 1-25 (MLIPRRVKHRKQHHPSRSGAAKGGT) is disordered.

It belongs to the universal ribosomal protein uL16 family. In terms of assembly, part of the 50S ribosomal subunit.

Functionally, binds 23S rRNA and is also seen to make contacts with the A and possibly P site tRNAs. The sequence is that of Large ribosomal subunit protein uL16 from Rhodococcus erythropolis (strain PR4 / NBRC 100887).